We begin with the raw amino-acid sequence, 94 residues long: Small ribosomal subunit protein bS6 (94 aa).

Belongs to the bacterial ribosomal protein bS6 family.

Its function is as follows. Binds together with bS18 to 16S ribosomal RNA. The polypeptide is Small ribosomal subunit protein bS6 (Clostridium botulinum (strain Loch Maree / Type A3)).